The primary structure comprises 385 residues: Methionyl-tRNA formyltransferase, mitochondrial (385 aa).

This sequence belongs to the Fmt family.

The protein resides in the mitochondrion. It catalyses the reaction L-methionyl-tRNA(fMet) + (6R)-10-formyltetrahydrofolate = N-formyl-L-methionyl-tRNA(fMet) + (6S)-5,6,7,8-tetrahydrofolate + H(+). In terms of biological role, methionyl-tRNA formyltransferase that formylates methionyl-tRNA in mitochondria and is crucial for translation initiation. The sequence is that of Methionyl-tRNA formyltransferase, mitochondrial (Mtfmt) from Rattus norvegicus (Rat).